Here is a 246-residue protein sequence, read N- to C-terminus: Probable transcriptional regulatory protein YebC (246 aa).

The segment at 1–20 (MAGHSKWANTRHRKAAQDAK) is disordered.

The protein belongs to the TACO1 family.

The protein resides in the cytoplasm. The protein is Probable transcriptional regulatory protein YebC of Shigella flexneri.